Consider the following 391-residue polypeptide: Na(+)/H(+) antiporter NhaA 1 (391 aa).

A run of 11 helical transmembrane segments spans residues 19 to 39, 56 to 76, 98 to 118, 128 to 148, 157 to 177, 180 to 200, 208 to 228, 264 to 284, 297 to 317, 335 to 355, and 364 to 384; these read FLAS…AALI, VWLG…IFFL, ALPG…YIAI, GWAI…SLLG, VFLA…IAFF, SGLN…LIAL, LLPY…SGVH, VAFA…LSGI, VALG…VLAI, GVAI…NLAF, and EVKV…ILLL.

It belongs to the NhaA Na(+)/H(+) (TC 2.A.33) antiporter family.

It localises to the cell inner membrane. It carries out the reaction Na(+)(in) + 2 H(+)(out) = Na(+)(out) + 2 H(+)(in). Na(+)/H(+) antiporter that extrudes sodium in exchange for external protons. The polypeptide is Na(+)/H(+) antiporter NhaA 1 (Pseudomonas savastanoi pv. phaseolicola (strain 1448A / Race 6) (Pseudomonas syringae pv. phaseolicola (strain 1448A / Race 6))).